The following is a 419-amino-acid chain: MNQEINNFYIKDQEIFDQIKLEEKRQKESINLIASENFVSQDVLKVQGTILTNKYAEGYPEKRFYNGCQYIDEIEKIAIERATELFKAKYANVQPHSGSQANMAVFQALLNPNDRILGLSLSDGGHLTHGSKMNFSGKYYESYFYGLNSKTETIDYAEVEKIAFAIRPKLIITGYSSYSKIIDFKSFRKIANKVNAYLMADIAHISGLVASGLHPCPLEAQADVVTSTTHKTLRGPRGGLILTNNKEIINKINKAVFPGGQGGPLMHIIAAKAVAFKEALHSDFIKYQKQILKNACFFAENLQKKGYRIISKSTENHLFLVDVKSKNPNFTGKKISDILNKVNIVVNKNVIPFDKETPLITSGIRLGTPAMTTRGFKENEFAKVSDFIDEAITNHNDLNYLNNLKQKVITLSKNFPLKI.

Residues leucine 121 and 125 to 127 (GHL) contribute to the (6S)-5,6,7,8-tetrahydrofolate site. Lysine 231 is modified (N6-(pyridoxal phosphate)lysine).

The protein belongs to the SHMT family. Homodimer. Pyridoxal 5'-phosphate is required as a cofactor.

It localises to the cytoplasm. It catalyses the reaction (6R)-5,10-methylene-5,6,7,8-tetrahydrofolate + glycine + H2O = (6S)-5,6,7,8-tetrahydrofolate + L-serine. Its pathway is one-carbon metabolism; tetrahydrofolate interconversion. It functions in the pathway amino-acid biosynthesis; glycine biosynthesis; glycine from L-serine: step 1/1. Catalyzes the reversible interconversion of serine and glycine with tetrahydrofolate (THF) serving as the one-carbon carrier. This reaction serves as the major source of one-carbon groups required for the biosynthesis of purines, thymidylate, methionine, and other important biomolecules. Also exhibits THF-independent aldolase activity toward beta-hydroxyamino acids, producing glycine and aldehydes, via a retro-aldol mechanism. The sequence is that of Serine hydroxymethyltransferase from Phytoplasma mali (strain AT).